The sequence spans 304 residues: MPEAAIEFDKVKKSYGEKTVVDGLSFHVAPGECFGLLGPNGAGKTTTLRMLLGIAAPDAGTIRLCGEPIPRRARVARARVGVVPQFDNLDPDFTVRENLLVFGRYFGMSAAQCRAMVPPLLEFARLESKADARVSELSGGMKRRLTLARALVNDPDVLIMDEPTTGLDPQARHLIWERLRSLLARGKTILLTTHFMEEAERLCHRLCVIEEGRKIAEGAPSALIASEIGCDVIEIFGPDPVALRDELAPLVERTEISGETLFCYVIDAQPVHARLKQRADLRYLHRPANLEDVFLRLTGREMQD.

In terms of domain architecture, ABC transporter spans 6 to 236 (IEFDKVKKSY…EIGCDVIEIF (231 aa)). An ATP-binding site is contributed by 38–45 (GPNGAGKT).

The protein belongs to the ABC transporter superfamily. Lipooligosaccharide exporter (TC 3.A.1.102) family. As to quaternary structure, the complex is composed of two ATP-binding proteins (NodI) and two transmembrane proteins (NodJ).

Its subcellular location is the cell inner membrane. Functionally, part of the ABC transporter complex NodIJ involved in the export of the nodulation factors (Nod factors), the bacterial signal molecules that induce symbiosis and subsequent nodulation induction. Nod factors are LCO (lipo-chitin oligosaccharide), a modified beta-1,4-linked N-acetylglucosamine oligosaccharide. This subunit is responsible for energy coupling to the transport system. The protein is Nod factor export ATP-binding protein I of Paraburkholderia xenovorans (strain LB400).